We begin with the raw amino-acid sequence, 234 residues long: Glucosamine-6-phosphate deaminase (234 aa).

The active-site Proton acceptor; for enolization step is aspartate 62. Asparagine 128 acts as the For ring-opening step in catalysis. Histidine 130 (proton acceptor; for ring-opening step) is an active-site residue. The active-site For ring-opening step is the glutamate 135.

Belongs to the glucosamine/galactosamine-6-phosphate isomerase family. NagB subfamily.

It catalyses the reaction alpha-D-glucosamine 6-phosphate + H2O = beta-D-fructose 6-phosphate + NH4(+). The protein operates within amino-sugar metabolism; N-acetylneuraminate degradation; D-fructose 6-phosphate from N-acetylneuraminate: step 5/5. Its function is as follows. Catalyzes the reversible isomerization-deamination of glucosamine 6-phosphate (GlcN6P) to form fructose 6-phosphate (Fru6P) and ammonium ion. The polypeptide is Glucosamine-6-phosphate deaminase (Lactobacillus delbrueckii subsp. bulgaricus (strain ATCC 11842 / DSM 20081 / BCRC 10696 / JCM 1002 / NBRC 13953 / NCIMB 11778 / NCTC 12712 / WDCM 00102 / Lb 14)).